A 461-amino-acid chain; its full sequence is Asparagine--tRNA ligase (461 aa).

This sequence belongs to the class-II aminoacyl-tRNA synthetase family. In terms of assembly, homodimer.

It localises to the cytoplasm. It catalyses the reaction tRNA(Asn) + L-asparagine + ATP = L-asparaginyl-tRNA(Asn) + AMP + diphosphate + H(+). This Nitratidesulfovibrio vulgaris (strain ATCC 29579 / DSM 644 / CCUG 34227 / NCIMB 8303 / VKM B-1760 / Hildenborough) (Desulfovibrio vulgaris) protein is Asparagine--tRNA ligase.